Consider the following 510-residue polypeptide: Crotonobetaine/carnitine--CoA ligase (510 aa).

This sequence belongs to the ATP-dependent AMP-binding enzyme family.

The enzyme catalyses 4-(trimethylamino)butanoate + ATP + CoA = 4-(trimethylamino)butanoyl-CoA + AMP + diphosphate. It carries out the reaction crotonobetaine + ATP + CoA = crotonobetainyl-CoA + AMP + diphosphate. It catalyses the reaction (R)-carnitine + ATP + CoA = (R)-carnitinyl-CoA + AMP + diphosphate. It functions in the pathway amine and polyamine metabolism; carnitine metabolism. Catalyzes the transfer of CoA to carnitine, generating the initial carnitinyl-CoA needed for the CaiB reaction cycle. Also has activity toward crotonobetaine and gamma-butyrobetaine. This Shigella flexneri serotype 5b (strain 8401) protein is Crotonobetaine/carnitine--CoA ligase.